The primary structure comprises 560 residues: Dihydroxy-acid dehydratase (560 aa).

Cys-52 lines the [2Fe-2S] cluster pocket. Asp-84 contributes to the Mg(2+) binding site. Residue Cys-125 coordinates [2Fe-2S] cluster. Asp-126 and Lys-127 together coordinate Mg(2+). The residue at position 127 (Lys-127) is an N6-carboxylysine. Cys-197 provides a ligand contact to [2Fe-2S] cluster. Position 448 (Glu-448) interacts with Mg(2+). Residue Ser-474 is the Proton acceptor of the active site.

Belongs to the IlvD/Edd family. In terms of assembly, homodimer. [2Fe-2S] cluster serves as cofactor. Requires Mg(2+) as cofactor.

The catalysed reaction is (2R)-2,3-dihydroxy-3-methylbutanoate = 3-methyl-2-oxobutanoate + H2O. The enzyme catalyses (2R,3R)-2,3-dihydroxy-3-methylpentanoate = (S)-3-methyl-2-oxopentanoate + H2O. Its pathway is amino-acid biosynthesis; L-isoleucine biosynthesis; L-isoleucine from 2-oxobutanoate: step 3/4. It participates in amino-acid biosynthesis; L-valine biosynthesis; L-valine from pyruvate: step 3/4. Functionally, functions in the biosynthesis of branched-chain amino acids. Catalyzes the dehydration of (2R,3R)-2,3-dihydroxy-3-methylpentanoate (2,3-dihydroxy-3-methylvalerate) into 2-oxo-3-methylpentanoate (2-oxo-3-methylvalerate) and of (2R)-2,3-dihydroxy-3-methylbutanoate (2,3-dihydroxyisovalerate) into 2-oxo-3-methylbutanoate (2-oxoisovalerate), the penultimate precursor to L-isoleucine and L-valine, respectively. This chain is Dihydroxy-acid dehydratase, found in Francisella tularensis subsp. novicida (strain U112).